Reading from the N-terminus, the 129-residue chain is uncharacterized protein (129 aa).

The tract at residues 1–129 (MGRMASPLRS…PARQSARMAR (129 aa)) is disordered. Over residues 18–46 (ESTRHKETSTVRVETSSHREETSSHRVET) the composition is skewed to basic and acidic residues. Positions 47–59 (SSRQVRTSSRQVE) are enriched in low complexity. The segment covering 70–97 (LTPSTKRLPQFLEVSSQHVETSSQCTET) has biased composition (polar residues).

This is an uncharacterized protein from Mus musculus (Mouse).